Reading from the N-terminus, the 369-residue chain is Translocating chain-associated membrane protein 1-like 1 (369 aa).

Over 1-29 (MGLRKKSTKNPPVLSQEFILQNHADIVSC) the chain is Cytoplasmic. Residues 30-50 (VGMFFLLGLVFEGTAEASIVF) traverse the membrane as a helical segment. The Lumenal segment spans residues 51 to 81 (LTLQHSVAVPAAEEQATGSKSLYYYGVKDLA). A helical transmembrane segment spans residues 82-102 (TVFFYMLVAIIIHATIQEYVL). Residues 103–121 (DKINKRMQFTKAKQNKFNE) lie on the Cytoplasmic side of the membrane. One can recognise a TLC domain in the interval 117–326 (NKFNESGQFS…TLWLQRWVED (210 aa)). The chain crosses the membrane as a helical span at residues 122-142 (SGQFSVFYFFSCIWGTFILIS). Residues 143-164 (ENCLSDPTLIWKARPHSMMTFQ) are Lumenal-facing. Residues 165–185 (MKFFYISQLAYWFHAFPELYF) form a helical membrane-spanning segment. Over 186 to 196 (QKTKKQDIPRQ) the chain is Cytoplasmic. A helical transmembrane segment spans residues 197 to 215 (LVYIGLHLFHITGAYLLYL). Residues 216-219 (NHLG) lie on the Lumenal side of the membrane. The chain crosses the membrane as a helical span at residues 220–242 (LLLLVLHYFVELLSHMCGLFYFS). Topologically, residues 243–249 (DEKYQKG) are cytoplasmic. The chain crosses the membrane as a helical span at residues 250-270 (ISLWAIVFILGRLVTLIVSVL). Topologically, residues 271-297 (TVGFHLAGSQNRNPDALTGNVNVLAAK) are lumenal. A helical membrane pass occupies residues 298-318 (IAVLSSSCTIQAYVTWNLITL). At 319-369 (WLQRWVEDSNIQASCMKKKRSRSSKKRTENGVGVETSNRVDCPPKRKEKSS) the chain is on the cytoplasmic side. The segment at 335 to 369 (KKKRSRSSKKRTENGVGVETSNRVDCPPKRKEKSS) is disordered. A compositionally biased stretch (basic and acidic residues) spans 360 to 369 (CPPKRKEKSS).

The protein belongs to the TRAM family.

Its subcellular location is the endoplasmic reticulum membrane. In terms of biological role, stimulatory or required for the translocation of secretory proteins across the ER membrane. This chain is Translocating chain-associated membrane protein 1-like 1 (TRAM1L1), found in Homo sapiens (Human).